Reading from the N-terminus, the 122-residue chain is Large ribosomal subunit protein uL14 (122 aa).

This sequence belongs to the universal ribosomal protein uL14 family. In terms of assembly, part of the 50S ribosomal subunit. Forms a cluster with proteins L3 and L19. In the 70S ribosome, L14 and L19 interact and together make contacts with the 16S rRNA in bridges B5 and B8.

Binds to 23S rRNA. Forms part of two intersubunit bridges in the 70S ribosome. This chain is Large ribosomal subunit protein uL14, found in Alcanivorax borkumensis (strain ATCC 700651 / DSM 11573 / NCIMB 13689 / SK2).